A 435-amino-acid polypeptide reads, in one-letter code: Tumor necrosis factor receptor superfamily member 3 (435 aa).

An N-terminal signal peptide occupies residues 1–30 (MLLPWATSAPGLAWGPLVLGLFGLLAASQP). The Extracellular segment spans residues 31–227 (QAVPPYASEN…PPEMSGTMLM (197 aa)). A glycan (N-linked (GlcNAc...) asparagine) is linked at Asn40. TNFR-Cys repeat units lie at residues 42-81 (TCRD…TVCA), 82-124 (TCAE…KTQC), 125-168 (RCQP…NHCV), and 169-211 (PCKA…TTCK). 10 disulfides stabilise this stretch: Cys43–Cys58, Cys59–Cys72, Cys62–Cys80, Cys83–Cys98, Cys101–Cys116, Cys104–Cys124, Cys126–Cys132, Cys139–Cys148, Cys142–Cys167, and Cys170–Cys185. N-linked (GlcNAc...) asparagine glycosylation is present at Asn177. Residues 228–248 (LAVLLPLAFFLLLATVFSCIW) form a helical membrane-spanning segment. Residues 249–435 (KSHPSLCRKL…GPRNQFITHD (187 aa)) are Cytoplasmic-facing. Residue Ser323 is modified to Phosphoserine. The span at 373 to 399 (PGPGDLPATPEPPYPIPEEGDPGPPGL) shows a compositional bias: pro residues. The segment at 373–435 (PGPGDLPATP…GPRNQFITHD (63 aa)) is disordered. The segment covering 403 to 417 (HQEDGKAWHLAETEH) has biased composition (basic and acidic residues). Residues 421 to 435 (TPSNRGPRNQFITHD) show a composition bias toward polar residues.

As to quaternary structure, self-associates; dimerization and trimerization are promoted by lymphotoxin (LTA(1)-LTB(2)). Associates with TRAF3. Associates with TRAF4. Associates with TRAF5. Interacts with Aedes aegypti lymphotoxin beta receptor inhibitor; the interaction reduces dimerization and trimerization of LTBR induced by lymphotoxin (LTA(1)-LTB(2)). (Microbial infection) Interacts with HCV core protein.

It is found in the membrane. Its function is as follows. Receptor for the heterotrimeric lymphotoxin containing LTA and LTB, and for TNFS14/LIGHT. Activates NF-kappa-B signaling pathway upon stimulation with lymphotoxin (LTA(1)-LTB(2)). Promotes apoptosis via TRAF3 and TRAF5. May play a role in the development of lymphoid organs. The chain is Tumor necrosis factor receptor superfamily member 3 (LTBR) from Homo sapiens (Human).